The following is a 544-amino-acid chain: Chaperonin GroEL (544 aa).

Residues 29–32 (TLGP), 86–90 (DGTTT), Gly413, 476–478 (NAA), and Asp492 each bind ATP.

It belongs to the chaperonin (HSP60) family. As to quaternary structure, forms a cylinder of 14 subunits composed of two heptameric rings stacked back-to-back. Interacts with the co-chaperonin GroES.

Its subcellular location is the cytoplasm. It carries out the reaction ATP + H2O + a folded polypeptide = ADP + phosphate + an unfolded polypeptide.. In terms of biological role, together with its co-chaperonin GroES, plays an essential role in assisting protein folding. The GroEL-GroES system forms a nano-cage that allows encapsulation of the non-native substrate proteins and provides a physical environment optimized to promote and accelerate protein folding. The polypeptide is Chaperonin GroEL (Bacillus mycoides (strain KBAB4) (Bacillus weihenstephanensis)).